Consider the following 247-residue polypeptide: Elongation factor Ts (247 aa).

Positions 82 to 85 (TDFV) are involved in Mg(2+) ion dislocation from EF-Tu.

The protein belongs to the EF-Ts family.

It is found in the cytoplasm. Associates with the EF-Tu.GDP complex and induces the exchange of GDP to GTP. It remains bound to the aminoacyl-tRNA.EF-Tu.GTP complex up to the GTP hydrolysis stage on the ribosome. The sequence is that of Elongation factor Ts (tsf) from Arthrospira platensis (Spirulina platensis).